The sequence spans 368 residues: Peptide chain release factor 2 (368 aa).

N5-methylglutamine is present on glutamine 245.

The protein belongs to the prokaryotic/mitochondrial release factor family. Methylated by PrmC. Methylation increases the termination efficiency of RF2.

It localises to the cytoplasm. In terms of biological role, peptide chain release factor 2 directs the termination of translation in response to the peptide chain termination codons UGA and UAA. The polypeptide is Peptide chain release factor 2 (prfB) (Treponema pallidum (strain Nichols)).